A 757-amino-acid chain; its full sequence is Myb-related protein A (757 aa).

HTH myb-type domains lie at 30-81 (KKIC…QKVL), 82-137 (NPEL…NPEV), and 138-188 (KKSS…RRKV). 3 consecutive DNA-binding regions (H-T-H motif) follow at residues 58–81 (WAFIASHLQNRSDFQCQHRWQKVL), 110–133 (WSLIAKHLKGRIGKQCRERWHNHL), and 161–184 (WAEIAKLLPGRTDNSIKNHWNSTM). The interval 187–209 (KVEQEGYLQDGTKSSSERTGSST) is disordered. The span at 197 to 209 (GTKSSSERTGSST) shows a compositional bias: polar residues. The tract at residues 235–300 (IPVYQYASPE…RLSSQAGSLP (66 aa)) is transcriptional activation domain. The tract at residues 303–558 (SGSFVMEDCV…IRRSLLGSTP (256 aa)) is negative regulatory domain.

In terms of assembly, component of the DREAM complex. Expressed ubiquitously.

It localises to the nucleus. In terms of biological role, strong transcriptional activator; DNA-binding protein that specifically recognize the sequence 5'-YAAC[GT]G-3'. Could have a role in the proliferation and/or differentiation of neurogenic, spermatogenic and B-lymphoid cells. This is Myb-related protein A (MYBL1) from Gallus gallus (Chicken).